Reading from the N-terminus, the 496-residue chain is Putative zinc finger CCCH domain-containing protein 48 (496 aa).

Disordered regions lie at residues 1 to 77 and 108 to 194; these read MADS…QPVH and MGAG…HPDD. The span at 143 to 156 shows a compositional bias: acidic residues; it reads HLAEEEEEEEEEHY. 3 consecutive C3H1-type zinc fingers follow at residues 377-406, 439-467, and 469-496; these read EHKT…HGED, KYKT…HGEV, and LGKK…RHSY.

In Oryza sativa subsp. japonica (Rice), this protein is Putative zinc finger CCCH domain-containing protein 48.